Here is an 803-residue protein sequence, read N- to C-terminus: MAKNTQRTMPVLPLRDVVVFPYMVMPLFVGRAKSINALEEAMNDDKQILLVSQREADLEEPTPEDLFDVGTIANIIQLLKLPDDTVKVLVEGQNRAKINSLEDGEKCFSAQITPIETTYGDEKELVVAKSAVLSEFENYLTLNKKVPTDILNALQRIDDVDRLADTMAAHLPVSIRHKQNALELANVQERLEYLLGMMESEADILQVEKRIRGRVKKQMEKSQRNYYLNEQIKAIRKEMDGGENEDTIDEVEQLHQKVEAAGMPADVRDKVENELQKLKMMSAMSSEATVIRSYIEWMIQVPWHQRSKVKKDIVKAQQVLDTDHYGLDRVKERILEYLAVQARLNKVKGPILCLVGPPGVGKTSLGQSIANATGRKYVRMALGGVRDEAEIRGHRKTYIGALPGKLIQKMAKVGVKNPLFLLDEIDKMASDMRGDPASALLEVLDPEQNTTFNDHYLEVDYDLSDVMFVATSNSMNIPGPLLDRMEVIRLSGYTEDEKLNIAMRHLLAKQIERNGLKKGELTVEESAILDIIRYYTREAGVRGLEREISKICRKAVKNLLVNPKLKSITVNSDNLHDYLGVKRFEFGKADTQNRIGEVTGLAWTEVGGDLLTIETASVVGKGKLSFTGSLGDVMKESIQAAMTVVRARADKLGINAEFHEKRDIHIHVPDGATPKDGPSAGIAMCTALISCLTGNPVRADVAMTGEISLRGKVLPIGGLKEKLLAAHRGGIKTVLIPKENVKDLEEIPENVKQNLAIHAVETIDEVLGFALENPPEGIEFVKVEAKPKAPRRKVTSKSERAVN.

Positions 9–202 (MPVLPLRDVV…YLLGMMESEA (194 aa)) constitute a Lon N-terminal domain. Position 356 to 363 (356 to 363 (GPPGVGKT)) interacts with ATP. Residues 592–773 (QNRIGEVTGL…DEVLGFALEN (182 aa)) form the Lon proteolytic domain. Active-site residues include S679 and K722.

It belongs to the peptidase S16 family. In terms of assembly, homohexamer. Organized in a ring with a central cavity.

It localises to the cytoplasm. It catalyses the reaction Hydrolysis of proteins in presence of ATP.. ATP-dependent serine protease that mediates the selective degradation of mutant and abnormal proteins as well as certain short-lived regulatory proteins. Required for cellular homeostasis and for survival from DNA damage and developmental changes induced by stress. Degrades polypeptides processively to yield small peptide fragments that are 5 to 10 amino acids long. Binds to DNA in a double-stranded, site-specific manner. This is Lon protease from Haemophilus influenzae (strain ATCC 51907 / DSM 11121 / KW20 / Rd).